We begin with the raw amino-acid sequence, 95 residues long: MKDPRDIIKRPIITENTMNLIGQKKYTFEVDVKANKTEVKDAVEKIFGVKVEKVNIMNYKGKFKRVGRYSGYTNRRKKAIVTLTPDSKEIELFEV.

It belongs to the universal ribosomal protein uL23 family. Contacts protein L29, and trigger factor when it is bound to the ribosome. Part of the 50S ribosomal subunit.

Functionally, one of the early assembly proteins it binds 23S rRNA. One of the proteins that surrounds the polypeptide exit tunnel on the outside of the ribosome. Forms the main docking site for trigger factor binding to the ribosome. The sequence is that of Large ribosomal subunit protein uL23 from Geobacillus stearothermophilus (Bacillus stearothermophilus).